The sequence spans 465 residues: Protein dml1 (465 aa).

Serine 446 carries the phosphoserine modification.

The protein belongs to the misato family.

Its subcellular location is the mitochondrion. Involved in the partitioning of the mitochondrial organelle and mitochondrial DNA (mtDNA) inheritance. The chain is Protein dml1 (dml1) from Schizosaccharomyces pombe (strain 972 / ATCC 24843) (Fission yeast).